The following is a 153-amino-acid chain: MNQPSVIKLRELLDLLPHRYPFLLVDKVLSYDIEARSITAQKNVTINEPFFMGHFPNAPIMPGVLILEALAQAAGVLIGLVLENDRNKRIALFLGIQKAKFRQAVRPGDVLTLQADFSLISSKGGKAWAQARVDSQLVTEAELSFALVDKESI.

The active site involves His54.

It belongs to the thioester dehydratase family. FabZ subfamily.

The protein localises to the cytoplasm. It carries out the reaction a (3R)-hydroxyacyl-[ACP] = a (2E)-enoyl-[ACP] + H2O. Involved in unsaturated fatty acids biosynthesis. Catalyzes the dehydration of short chain beta-hydroxyacyl-ACPs and long chain saturated and unsaturated beta-hydroxyacyl-ACPs. The polypeptide is 3-hydroxyacyl-[acyl-carrier-protein] dehydratase FabZ (Chlamydia pneumoniae (Chlamydophila pneumoniae)).